The sequence spans 588 residues: Tannase (588 aa).

A signal peptide spans 1–18 (MRQHSRMAVAALAAGANA). 3 disulfides stabilise this stretch: C25–C71, C194–C502, and C261–C278. S195 (acyl-ester intermediate) is an active-site residue. Ca(2+) is bound by residues D262, D265, D269, and V271. Q317 bears the Pyrrolidone carboxylic acid mark. Residues D455 and H501 each act as charge relay system in the active site.

This sequence belongs to the tannase family. Heterooctamer of 4 33 kDa and 4 30 kDa subunits linked by disulfide bond(s). Post-translationally, the protein is glycosylated to a carbohydrate content of 22.7%. In terms of processing, the N-terminus of the 30 kDa subunit is blocked.

The enzyme catalyses digallate + H2O = 2 3,4,5-trihydroxybenzoate + H(+). Hydrolyzes ester bonds of tannic acid to produce gallic acid and glucose. The polypeptide is Tannase (Aspergillus oryzae (strain ATCC 42149 / RIB 40) (Yellow koji mold)).